A 232-amino-acid polypeptide reads, in one-letter code: Rho-related GTP-binding protein Rho6 (232 aa).

GTP contacts are provided by residues 23-28 (QCGKTA), 38-45 (YPETYVPT), 67-71 (DTSGS), 125-128 (CKTD), and 169-170 (AF). The Effector region signature appears at 42 to 50 (YVPTVFENY). Cys229 is modified (cysteine methyl ester). Cys229 carries S-geranylgeranyl cysteine lipidation. A propeptide spans 230-232 (SIM) (removed in mature form).

Belongs to the small GTPase superfamily. Rho family. In terms of assembly, binds GRB7 and PLXNB1. Interacts with PLXNA2. Interacts with UBXD5.

It is found in the cell membrane. The protein localises to the cytoplasm. The protein resides in the cytoskeleton. In terms of biological role, lacks intrinsic GTPase activity. Has a low affinity for GDP, and constitutively binds GTP. Controls rearrangements of the actin cytoskeleton. Induces the Rac-dependent neuritic process formation in part by disruption of the cortical actin filaments. Causes the formation of many neuritic processes from the cell body with disruption of the cortical actin filaments. The polypeptide is Rho-related GTP-binding protein Rho6 (RND1) (Bos taurus (Bovine)).